Reading from the N-terminus, the 369-residue chain is Histidinol-phosphate aminotransferase 2 (369 aa).

At K227 the chain carries N6-(pyridoxal phosphate)lysine.

The protein belongs to the class-II pyridoxal-phosphate-dependent aminotransferase family. Histidinol-phosphate aminotransferase subfamily. As to quaternary structure, homodimer. It depends on pyridoxal 5'-phosphate as a cofactor.

The catalysed reaction is L-histidinol phosphate + 2-oxoglutarate = 3-(imidazol-4-yl)-2-oxopropyl phosphate + L-glutamate. It participates in amino-acid biosynthesis; L-histidine biosynthesis; L-histidine from 5-phospho-alpha-D-ribose 1-diphosphate: step 7/9. The sequence is that of Histidinol-phosphate aminotransferase 2 (hisC2) from Mesorhizobium japonicum (strain LMG 29417 / CECT 9101 / MAFF 303099) (Mesorhizobium loti (strain MAFF 303099)).